A 157-amino-acid polypeptide reads, in one-letter code: SsrA-binding protein (157 aa).

Residues G126 to G157 form a disordered region. Basic and acidic residues predominate over residues Q132–G157.

It belongs to the SmpB family.

Its subcellular location is the cytoplasm. Functionally, required for rescue of stalled ribosomes mediated by trans-translation. Binds to transfer-messenger RNA (tmRNA), required for stable association of tmRNA with ribosomes. tmRNA and SmpB together mimic tRNA shape, replacing the anticodon stem-loop with SmpB. tmRNA is encoded by the ssrA gene; the 2 termini fold to resemble tRNA(Ala) and it encodes a 'tag peptide', a short internal open reading frame. During trans-translation Ala-aminoacylated tmRNA acts like a tRNA, entering the A-site of stalled ribosomes, displacing the stalled mRNA. The ribosome then switches to translate the ORF on the tmRNA; the nascent peptide is terminated with the 'tag peptide' encoded by the tmRNA and targeted for degradation. The ribosome is freed to recommence translation, which seems to be the essential function of trans-translation. This is SsrA-binding protein from Methylobacterium radiotolerans (strain ATCC 27329 / DSM 1819 / JCM 2831 / NBRC 15690 / NCIMB 10815 / 0-1).